A 546-amino-acid chain; its full sequence is Chaperonin GroEL (546 aa).

ATP-binding positions include 30 to 33, Lys-51, 87 to 91, Gly-415, 479 to 481, and Asp-495; these read TLGP, DGTTT, and NAA. A disordered region spans residues 527-546; that stretch reads DKPAAPPMPGGMGGMGGMDF. Gly residues predominate over residues 536–546; the sequence is GGMGGMGGMDF.

It belongs to the chaperonin (HSP60) family. As to quaternary structure, forms a cylinder of 14 subunits composed of two heptameric rings stacked back-to-back. Interacts with the co-chaperonin GroES.

The protein localises to the cytoplasm. It carries out the reaction ATP + H2O + a folded polypeptide = ADP + phosphate + an unfolded polypeptide.. Together with its co-chaperonin GroES, plays an essential role in assisting protein folding. The GroEL-GroES system forms a nano-cage that allows encapsulation of the non-native substrate proteins and provides a physical environment optimized to promote and accelerate protein folding. This Bordetella petrii (strain ATCC BAA-461 / DSM 12804 / CCUG 43448) protein is Chaperonin GroEL.